The following is a 223-amino-acid chain: Adenylate kinase (223 aa).

Residue 10-15 (GAGKGT) coordinates ATP. An NMP region spans residues 30–59 (STGDILRQAVKEGTEVGKIAGELMKAGKLI). Residues Thr31, Arg36, 57 to 59 (KLI), 85 to 88 (GFPR), and Gln92 each bind AMP. Residues 126–163 (GRYVCAQCGAGYHDEFKRPHKEGVCDICGSTEFKRRPD) are LID. Arg127 is an ATP binding site. Zn(2+)-binding residues include Cys130, Cys133, Cys150, and Cys153. Arg160 and Arg172 together coordinate AMP. Leu200 lines the ATP pocket.

Belongs to the adenylate kinase family. In terms of assembly, monomer.

The protein resides in the cytoplasm. It carries out the reaction AMP + ATP = 2 ADP. It participates in purine metabolism; AMP biosynthesis via salvage pathway; AMP from ADP: step 1/1. Functionally, catalyzes the reversible transfer of the terminal phosphate group between ATP and AMP. Plays an important role in cellular energy homeostasis and in adenine nucleotide metabolism. This is Adenylate kinase from Zymomonas mobilis subsp. mobilis (strain ATCC 31821 / ZM4 / CP4).